A 157-amino-acid polypeptide reads, in one-letter code: Large ribosomal subunit protein bL34c (157 aa).

The N-terminal 97 residues, 1–97 (MASLSTSVVA…GQRRRGLVVR (97 aa)), are a transit peptide targeting the chloroplast.

The protein belongs to the bacterial ribosomal protein bL34 family. In terms of assembly, part of the 50S ribosomal subunit.

Its subcellular location is the plastid. It localises to the chloroplast. Functionally, this protein binds directly to 23S ribosomal RNA. The sequence is that of Large ribosomal subunit protein bL34c (RPL34) from Arabidopsis thaliana (Mouse-ear cress).